The primary structure comprises 464 residues: L-cystine uptake protein TcyP (464 aa).

10 consecutive transmembrane segments (helical) span residues 3–23 (TLLVGINVAVMLILVGVLYYM), 34–54 (VFTALGVGILFGLILQFIYEP), 73–93 (YVKLLQMIVMPLILVSIISAF), 107–127 (GLIIGILILTTGIAAAVGIAA), 184–204 (PTSTISVVIFAAFIGIAFIGV), 225–245 (IVMRMVTLILRLTPYGVLALM), 263–283 (FVLASYVALIVMFIIHLLLIA), 347–367 (AGIYPAMLAMMVAPTVGIDPL), 371–391 (FILTLIAVVAISSFGVAGVGG), and 395–415 (FAALIVLSTMNLPIGIVALVI).

This sequence belongs to the dicarboxylate/amino acid:cation symporter (DAACS) (TC 2.A.23) family.

The protein resides in the membrane. Its function is as follows. Mediates uptake of L-cystine, the oxidized form of L-cysteine. The protein is L-cystine uptake protein TcyP of Bacillus cereus (strain ATCC 14579 / DSM 31 / CCUG 7414 / JCM 2152 / NBRC 15305 / NCIMB 9373 / NCTC 2599 / NRRL B-3711).